We begin with the raw amino-acid sequence, 294 residues long: uncharacterized protein (294 aa).

The tract at residues 1–32 is disordered; sequence MSHLKDPTTQYYTGEYPKQKQPTPGIQAKMTP. An N6-acetyllysine modification is found at lysine 39. An NADP(+)-binding site is contributed by 53–77; sequence LVTGGDSGIGRAAAIAYAREGADVA. Serine 186 provides a ligand contact to substrate. Tyrosine 199 (proton acceptor) is an active-site residue.

The protein belongs to the short-chain dehydrogenases/reductases (SDR) family.

This is an uncharacterized protein from Escherichia coli (strain K12).